The sequence spans 403 residues: Chalcone synthase 3 (403 aa).

Cysteine 170 is an active-site residue.

It belongs to the thiolase-like superfamily. Chalcone/stilbene synthases family.

It carries out the reaction (E)-4-coumaroyl-CoA + 3 malonyl-CoA + 3 H(+) = 2',4,4',6'-tetrahydroxychalcone + 3 CO2 + 4 CoA. It participates in secondary metabolite biosynthesis; flavonoid biosynthesis. Its function is as follows. The primary product of this enzyme is 4,2',4',6'-tetrahydroxychalcone (also termed naringenin-chalcone or chalcone) which can under specific conditions spontaneously isomerize into naringenin. This chain is Chalcone synthase 3 (CHS3), found in Gerbera hybrida (Daisy).